A 583-amino-acid chain; its full sequence is Lipoprotein LpqB (583 aa).

A signal peptide spans 1–29; sequence MSNKTTEATKTTKVKKVLSVVAGLGLLAG. A lipid anchor (N-palmitoyl cysteine) is attached at C30. The S-diacylglycerol cysteine moiety is linked to residue C30. Positions 38-63 are disordered; sequence NPEAISSYAPAPSGQEAPTPTDGQPS.

This sequence belongs to the LpqB lipoprotein family.

Its subcellular location is the cell membrane. The protein is Lipoprotein LpqB of Corynebacterium jeikeium (strain K411).